A 447-amino-acid polypeptide reads, in one-letter code: Argininosuccinate synthase (447 aa).

Residues alanine 17 to serine 25 and alanine 43 contribute to the ATP site. Tyrosine 99 is an L-citrulline binding site. The ATP site is built by glycine 129 and threonine 131. Residues threonine 131, asparagine 135, and aspartate 136 each coordinate L-aspartate. L-citrulline is bound at residue asparagine 135. Aspartate 136 is an ATP binding site. Residues arginine 139 and serine 192 each coordinate L-citrulline. Aspartate 194 contacts ATP. 3 residues coordinate L-citrulline: threonine 201, glutamate 203, and glutamate 280.

It belongs to the argininosuccinate synthase family. Type 2 subfamily. In terms of assembly, homotetramer.

The protein resides in the cytoplasm. The enzyme catalyses L-citrulline + L-aspartate + ATP = 2-(N(omega)-L-arginino)succinate + AMP + diphosphate + H(+). The protein operates within amino-acid biosynthesis; L-arginine biosynthesis; L-arginine from L-ornithine and carbamoyl phosphate: step 2/3. This Salmonella dublin (strain CT_02021853) protein is Argininosuccinate synthase.